A 279-amino-acid chain; its full sequence is MSGGYPALELSAEDLRLMLAAHVHVGETNMNFQMSTYVHGRTKDNFHIIKLDKTWEKILLSARAIAAIDTASDVFAIGSRPFSQRAVLKFANYTGATAMAGRFTPGAFTNQKQSCFREPRLLVVSDPLSDHQAVMEASSVNVPLIALCNTDSPLTRVDIVIPCNNKSTHSIAVVWWFLAREVRRIRGEDTRLQQWSVLPDLFLYRDPNEEEQNVEDPEDARLEPVIPGADAEAAETWGVEPSMPVGSLGDMGIAAPGYGPVGGTAGGWSNLDADPTETW.

This sequence belongs to the universal ribosomal protein uS2 family. Component of the small ribosomal subunit. Mature ribosomes consist of a small (40S) and a large (60S) subunit. The 40S subunit contains about 33 different proteins and 1 molecule of RNA (18S). The 60S subunit contains about 49 different proteins and 3 molecules of RNA (28S, 5.8S and 5S). Interacts with ribosomal protein S21.

Its subcellular location is the cytoplasm. Functionally, required for the assembly and/or stability of the 40S ribosomal subunit. Required for the processing of the 20S rRNA-precursor to mature 18S rRNA in a late step of the maturation of 40S ribosomal subunits. The chain is Small ribosomal subunit protein uS2 from Schistosoma japonicum (Blood fluke).